The following is a 233-amino-acid chain: Protein Thf1 (233 aa).

Residues 183-205 (DKLSKDLELYRSNLDKMTQALAV) are a coiled coil. Residues 213–233 (DRKKREQRQQQASTPVAPPNE) form a disordered region.

The protein belongs to the THF1 family.

In terms of biological role, may be involved in photosynthetic membrane biogenesis. The polypeptide is Protein Thf1 (Trichormus variabilis (strain ATCC 29413 / PCC 7937) (Anabaena variabilis)).